We begin with the raw amino-acid sequence, 274 residues long: 4-diphosphocytidyl-2-C-methyl-D-erythritol kinase (274 aa).

Lys-14 is an active-site residue. Position 94–104 (94–104 (PMQAGLGGGSS)) interacts with ATP. The active site involves Asp-134.

It belongs to the GHMP kinase family. IspE subfamily.

The enzyme catalyses 4-CDP-2-C-methyl-D-erythritol + ATP = 4-CDP-2-C-methyl-D-erythritol 2-phosphate + ADP + H(+). The protein operates within isoprenoid biosynthesis; isopentenyl diphosphate biosynthesis via DXP pathway; isopentenyl diphosphate from 1-deoxy-D-xylulose 5-phosphate: step 3/6. Functionally, catalyzes the phosphorylation of the position 2 hydroxy group of 4-diphosphocytidyl-2C-methyl-D-erythritol. This is 4-diphosphocytidyl-2-C-methyl-D-erythritol kinase from Thermosipho melanesiensis (strain DSM 12029 / CIP 104789 / BI429).